Here is a 130-residue protein sequence, read N- to C-terminus: Small ribosomal subunit protein uS8 (130 aa).

This sequence belongs to the universal ribosomal protein uS8 family. Part of the 30S ribosomal subunit. Contacts proteins S5 and S12.

Functionally, one of the primary rRNA binding proteins, it binds directly to 16S rRNA central domain where it helps coordinate assembly of the platform of the 30S subunit. In Glaesserella parasuis serovar 5 (strain SH0165) (Haemophilus parasuis), this protein is Small ribosomal subunit protein uS8.